Reading from the N-terminus, the 204-residue chain is Recombination protein RecR (204 aa).

A C4-type zinc finger spans residues 58–75 (CSICQNITDLGTDPCLLC). The Toprim domain occupies 83–181 (SVICVVESPT…NVTRIARGIP (99 aa)).

This sequence belongs to the RecR family.

May play a role in DNA repair. It seems to be involved in an RecBC-independent recombinational process of DNA repair. It may act with RecF and RecO. This is Recombination protein RecR from Chlorobaculum parvum (strain DSM 263 / NCIMB 8327) (Chlorobium vibrioforme subsp. thiosulfatophilum).